We begin with the raw amino-acid sequence, 642 residues long: Threonine--tRNA ligase (642 aa).

The TGS domain occupies 1-61; sequence MPIITLPDGS…EEDASLEIIT (61 aa). The segment at 244 to 535 is catalytic; that stretch reads DHRKIGKQLD…LIEEYAGFFP (292 aa). Cys-335, His-386, and His-512 together coordinate Zn(2+).

The protein belongs to the class-II aminoacyl-tRNA synthetase family. In terms of assembly, homodimer. Zn(2+) is required as a cofactor.

Its subcellular location is the cytoplasm. The catalysed reaction is tRNA(Thr) + L-threonine + ATP = L-threonyl-tRNA(Thr) + AMP + diphosphate + H(+). In terms of biological role, catalyzes the attachment of threonine to tRNA(Thr) in a two-step reaction: L-threonine is first activated by ATP to form Thr-AMP and then transferred to the acceptor end of tRNA(Thr). Also edits incorrectly charged L-seryl-tRNA(Thr). The chain is Threonine--tRNA ligase from Vibrio parahaemolyticus serotype O3:K6 (strain RIMD 2210633).